We begin with the raw amino-acid sequence, 326 residues long: N-acetyl-gamma-glutamyl-phosphate reductase (326 aa).

Cys-155 is an active-site residue.

It belongs to the NAGSA dehydrogenase family. Type 1 subfamily.

It localises to the cytoplasm. The catalysed reaction is N-acetyl-L-glutamate 5-semialdehyde + phosphate + NADP(+) = N-acetyl-L-glutamyl 5-phosphate + NADPH + H(+). The protein operates within amino-acid biosynthesis; L-arginine biosynthesis; N(2)-acetyl-L-ornithine from L-glutamate: step 3/4. Its function is as follows. Catalyzes the NADPH-dependent reduction of N-acetyl-5-glutamyl phosphate to yield N-acetyl-L-glutamate 5-semialdehyde. This is N-acetyl-gamma-glutamyl-phosphate reductase from Shewanella denitrificans (strain OS217 / ATCC BAA-1090 / DSM 15013).